Reading from the N-terminus, the 165-residue chain is MSKKGKKKSKNNSSVDGNRRLAENRQARYEYEILETLETGLELLGTEVKSIRAGKVNLKDGFCLIKKDQIQLHNVHISPHNHAGKFFNHEPLRIKRLLAHRKEIEKLKISLERKGLTIIPLSLYLKGSWIKLKIGVGKGRKTHDKRDREKINDSKRDVANALKRF.

The segment covering Met-1–Lys-10 has biased composition (basic residues). Residues Met-1–Leu-21 are disordered.

The protein belongs to the SmpB family.

The protein localises to the cytoplasm. Required for rescue of stalled ribosomes mediated by trans-translation. Binds to transfer-messenger RNA (tmRNA), required for stable association of tmRNA with ribosomes. tmRNA and SmpB together mimic tRNA shape, replacing the anticodon stem-loop with SmpB. tmRNA is encoded by the ssrA gene; the 2 termini fold to resemble tRNA(Ala) and it encodes a 'tag peptide', a short internal open reading frame. During trans-translation Ala-aminoacylated tmRNA acts like a tRNA, entering the A-site of stalled ribosomes, displacing the stalled mRNA. The ribosome then switches to translate the ORF on the tmRNA; the nascent peptide is terminated with the 'tag peptide' encoded by the tmRNA and targeted for degradation. The ribosome is freed to recommence translation, which seems to be the essential function of trans-translation. The chain is SsrA-binding protein from Prochlorococcus marinus (strain NATL1A).